The following is an 878-amino-acid chain: MTASKSSSATASASDRPDRYDPIALEQRWQSQWQQDDLYATRSPEPGQNAFYALSMFPYPSGSLHMGHVRNYVITDVIARAQRMRGDSVLHPMGWDAFGLPAENAAIERQVDPGVWTDRNIEQMKAQLARLGLSIDWSREQATCHADYYRWTQWLFLELMDQGLAYQKDATVNWDPVDQTVLANEQVDSEGRSWRSGALVEQKNLRQWFLRITNYADALLDDLDLLKGWPERVRTMQANWIGRSIGAEIDFRVSDHDDAVITVFTTRADTLHGVSYVVLAPEHPLVATLTAEHQRESVAAFRDLVGELSADERTADDRPKRGVPIGATAVNPANGESIPIWIADYVLAGYGTGAVMGVPAHDERDFLFARTYELPVKRVIQAAGTSDHLSDGEAWTGPGILLNSGRFDGQSSEEARQEITAHGQELGWARPKRQYRLRDWLISRQRYWGCPIPVIHCDHCGAVPVPADQLPVTLPKDVDLQGKGGSPLASLQSWVNVKCPSCGRDARRETDTMDTFMCSSWYFLRFADPHNTERAFDADAVERWLPVQQYVGGIEHAILHLLYSRFFTKALRDRGLLNIREPFERLLTQGMVQGVTYRNPRTGRYVAPSEVSDENAPKDPVDGGELEVLFEKMSKSKYNGVDPAAVIDRYGADTARMFILFKAPPEKDLEWDDADVEGQFRFLQRLWRLIESVRSDDQDQLLGDPVDPPEGSGLSDKEGEIRRAVHTAIEAVSDDLKGDFQFNTAISELMKLSNTLSGALPEASRAVQAEAVSALIRLLAPFAPHLAEEFWFSLGGQDSVHKQPWPLHDPAALVRDTVDLVIQVKGKVRGTITVPADCSKETLEELALASDVAERWLEGKPPRRVIVVPGKLVNLVPS.

Low complexity predominate over residues methionine 1–serine 14. The segment at methionine 1 to isoleucine 23 is disordered. A 'HIGH' region motif is present at residues proline 58–histidine 68. A 'KMSKS' region motif is present at residues lysine 632–serine 636. Residue lysine 635 participates in ATP binding.

This sequence belongs to the class-I aminoacyl-tRNA synthetase family.

It is found in the cytoplasm. The enzyme catalyses tRNA(Leu) + L-leucine + ATP = L-leucyl-tRNA(Leu) + AMP + diphosphate. The protein is Leucine--tRNA ligase of Synechococcus sp. (strain WH7803).